Here is a 174-residue protein sequence, read N- to C-terminus: Protein C2-DOMAIN ABA-RELATED 6 (174 aa).

The region spanning 1–115 (MEKTEEEVEM…HKLGLKELPH (115 aa)) is the C2 domain. Ca(2+)-binding residues include Arg-30, Asp-31, Asp-36, Asp-82, Lys-83, Asp-84, and Asp-90.

Belongs to the plant CAR protein family. As to quaternary structure, binds to PYR/PYL/RCAR abscisic acid intracellular receptors in an ABA-independent manner, both at the plasma membrane and in the nucleus. Subunit of a complex made of CAR6, PHOT1 and RPT3/NPH3. Interacts directly with RPT3/NPH3.

It is found in the cell membrane. The protein resides in the nucleus. In terms of biological role, stimulates the GTPase/ATPase activities of Obg-like ATPases. Mediates the transient calcium-dependent interaction of PYR/PYL/RCAR abscisic acid (ABA) receptors with the plasma membrane and thus regulates ABA sensitivity. Prevents hypocotyl bending as well as gravitropic response under blue light conditions. This Arabidopsis thaliana (Mouse-ear cress) protein is Protein C2-DOMAIN ABA-RELATED 6.